Reading from the N-terminus, the 607-residue chain is Siderophore iron transporter mirC (607 aa).

Transmembrane regions (helical) follow at residues 67 to 89 (LVIA…QTIM), 129 to 148 (VFGR…LGYI), 186 to 208 (SLLN…VWIG), 223 to 245 (WGYG…SLLL), 279 to 301 (IFGL…LAAN), 311 to 328 (IVAM…LPFW), 349 to 368 (TALA…YFSV), 388 to 410 (GRVT…ILIK), 417 to 436 (VYVT…MLLY), 446 to 468 (VLGT…QLGV), 481 to 503 (TAMF…GAVW), and 557 to 574 (LLVL…LSLL). Over residues 584–593 (SESSDHDDAS) the composition is skewed to basic and acidic residues. A disordered region spans residues 584–607 (SESSDHDDASPRNGLGPGERAKRT).

This sequence belongs to the major facilitator superfamily.

It is found in the membrane. This chain is Siderophore iron transporter mirC (mirC), found in Emericella nidulans (strain FGSC A4 / ATCC 38163 / CBS 112.46 / NRRL 194 / M139) (Aspergillus nidulans).